The primary structure comprises 435 residues: NADH-quinone oxidoreductase subunit D (435 aa).

The protein belongs to the complex I 49 kDa subunit family. In terms of assembly, NDH-1 is composed of 14 different subunits. Subunits NuoB, C, D, E, F, and G constitute the peripheral sector of the complex.

Its subcellular location is the cell inner membrane. The catalysed reaction is a quinone + NADH + 5 H(+)(in) = a quinol + NAD(+) + 4 H(+)(out). Its function is as follows. NDH-1 shuttles electrons from NADH, via FMN and iron-sulfur (Fe-S) centers, to quinones in the respiratory chain. The immediate electron acceptor for the enzyme in this species is believed to be ubiquinone. Couples the redox reaction to proton translocation (for every two electrons transferred, four hydrogen ions are translocated across the cytoplasmic membrane), and thus conserves the redox energy in a proton gradient. This is NADH-quinone oxidoreductase subunit D from Xanthomonas oryzae pv. oryzae (strain MAFF 311018).